An 89-amino-acid polypeptide reads, in one-letter code: Small ribosomal subunit protein bS20 (89 aa).

It belongs to the bacterial ribosomal protein bS20 family.

Binds directly to 16S ribosomal RNA. The sequence is that of Small ribosomal subunit protein bS20 from Hahella chejuensis (strain KCTC 2396).